A 259-amino-acid polypeptide reads, in one-letter code: 5'-nucleotidase SurE (259 aa).

Residues D8, D9, S41, and N93 each contribute to the a divalent metal cation site.

Belongs to the SurE nucleotidase family. Requires a divalent metal cation as cofactor.

It localises to the cytoplasm. It catalyses the reaction a ribonucleoside 5'-phosphate + H2O = a ribonucleoside + phosphate. Functionally, nucleotidase that shows phosphatase activity on nucleoside 5'-monophosphates. This is 5'-nucleotidase SurE from Verminephrobacter eiseniae (strain EF01-2).